The primary structure comprises 274 residues: Oxidoreductase BOA17 (274 aa).

NADP(+) contacts are provided by Leu-14, Thr-32, Asp-57, Asn-84, and Lys-117. Active-site proton donor residues include Ser-135 and Tyr-149. NADP(+) contacts are provided by Tyr-149, Lys-153, Ile-182, and Thr-184. Catalysis depends on Lys-153, which acts as the Lowers pKa of active site Tyr.

This sequence belongs to the short-chain dehydrogenases/reductases (SDR) family.

It participates in polyketide biosynthesis. Its function is as follows. Oxidoreductase; part of the gene cluster B that mediates the biosynthesis of botcinic acid and its botcinin derivatives, acetate-derived polyketides that contribute to virulence when combined with the sesquiterpene botrydial. Botcinic acid and its derivatives have been shown to induce chlorosis and necrosis during host plant infection, but also have antifungal activities. Two polyketide synthases, BOA6 and BOA9, are involved in the biosynthesis of botcinins. BOA6 mediates the formation of the per-methylated tetraketide core by condensation of four units of malonyl-CoA with one unit of acetyl-CoA, which would be methylated in activated methylene groups to yield a bicyclic acid intermediate that could then either be converted to botrylactone derivatives or lose the starter acetate unit through a retro-Claisen type C-C bond cleavage to yield botcinin derivatives. The second polyketide synthase, BOA9, is probably required for the biosynthesis of the tetraketide side chain of botcinins. The methyltransferase (MT) domain within BOA6 is probably responsible for the incorporation of four methyl groups. The trans-enoyl reductase BOA5 might take over the enoyl reductase function of BOA6 that misses an ER domain. The monooxygenases BOA2, BOA3 and BOA4 might be involved in further hydroxylations at C4, C5 and C8, whereas BOA7, close to BOA9, could potentially be involved in the hydroxylation at C4 in the side chain of botcinins. The protein is Oxidoreductase BOA17 of Botryotinia fuckeliana (strain B05.10) (Noble rot fungus).